The sequence spans 492 residues: GDP-fucose protein O-fucosyltransferase 4 (492 aa).

The Cytoplasmic segment spans residues 1-7; it reads MAAGPIR. The chain crosses the membrane as a helical; Signal-anchor for type II membrane protein span at residues 8–24; it reads VVLVLLGVLSVCAASGH. The Lumenal segment spans residues 25–492; that stretch reads GSVAEREAGG…HEIFMKRQHL (468 aa). An N-linked (GlcNAc...) asparagine glycan is attached at asparagine 166. Cysteine 389 and cysteine 392 are joined by a disulfide. Asparagine 443 carries an N-linked (GlcNAc...) asparagine glycan.

It belongs to the glycosyltransferase 10 family.

It is found in the endoplasmic reticulum membrane. The enzyme catalyses L-threonyl-[protein] + GDP-beta-L-fucose = 3-O-(alpha-L-fucosyl)-L-threonyl-[protein] + GDP + H(+). It catalyses the reaction L-seryl-[protein] + GDP-beta-L-fucose = 3-O-(alpha-L-fucosyl)-L-seryl-[protein] + GDP + H(+). Its pathway is protein modification; protein glycosylation. Its function is as follows. Protein O-fucosyltransferase that specifically catalyzes O-fucosylation of serine or threonine residues in EMI domains of target proteins, such as MMRN1, MMRN2 and EMID1. Attaches fucose through an O-glycosidic linkage. O-fucosylation of EMI domain-containing proteins may be required for facilitating protein folding and secretion. Also shows minor alpha-(1,3)-fucosyltransferase activity toward activity toward biantennary N-glycan acceptors. However, this was tested with a library of synthetic substrates and this activity is unsure in vivo. The polypeptide is GDP-fucose protein O-fucosyltransferase 4 (Homo sapiens (Human)).